The sequence spans 902 residues: 4-hydroxyphenylacetate decarboxylase glycyl radical subunit (902 aa).

In terms of domain architecture, PFL spans Lys38–Leu774. Positions 348 and 507 each coordinate 4-hydroxyphenylacetate. The active-site Cysteine radical intermediate is the Cys507. Catalysis depends on Glu509, which acts as the Proton donor. 4-hydroxyphenylacetate is bound by residues His540 and Glu641. Positions Gly782 to Val902 constitute a Glycine radical domain. Gly877 bears the Glycine radical mark.

This sequence belongs to the glycyl radical enzyme (GRE) family. HPAD subfamily. In terms of assembly, heterooctamer consisting of 4 large (HpdB) subunits and 4 small (HpdC) subunits, arranged as a tetramer of heterodimers. Also forms a catalytically inactive homodimer. In terms of processing, requires the activating protein CsdA to generate the key active site glycyl radical that is involved in catalysis. Post-translationally, phosphorylated on serine. Phosphorylation may trigger the formation of the active heterooctamers and thereby regulates enzyme activity.

It carries out the reaction 4-hydroxyphenylacetate + H(+) = 4-methylphenol + CO2. The catalysed reaction is 3,4-dihydroxyphenylacetate + H(+) = 4-methylcatechol + CO2. In terms of biological role, glycyl radical subunit of the HPA decarboxylase that decarboxylates phenylacetates with a hydroxyl group in the p-position. Active toward 4-hydroxyphenylacetate and 3,4-dihydroxyphenylacetate, forming 4-methylphenol and 4-methylcatechol, respectively. Is likely involved in the catabolism of aromatic amino acids such as tyrosine fermentation. 4-methylphenol (p-cresol) formation provides metabolic toxicity, which allows an active suppression of other microbes and may provide growth advantages for the producers in highly competitive environments. The large subunit is the catalytic subunit that binds the substrate. The sequence is that of 4-hydroxyphenylacetate decarboxylase glycyl radical subunit from Clostridioides difficile (strain 630) (Peptoclostridium difficile).